A 150-amino-acid chain; its full sequence is Heavy metal-associated isoprenylated plant protein 24 (150 aa).

The HMA domain maps to 26–89; sequence QTVALRVARI…AAKSTKKKVE (64 aa). A metal cation is bound by residues Cys-37 and Cys-40. The residue at position 147 (Cys-147) is a Cysteine methyl ester. A lipid anchor (S-farnesyl cysteine) is attached at Cys-147. The propeptide at 148–150 is removed in mature form; it reads AIM.

It belongs to the HIPP family. As to quaternary structure, interacts with ZHD11/HB29.

In terms of biological role, heavy-metal-binding protein. This is Heavy metal-associated isoprenylated plant protein 24 from Arabidopsis thaliana (Mouse-ear cress).